The chain runs to 558 residues: NAD-dependent malic enzyme 2 (558 aa).

The Proton donor role is filled by Y101. An NAD(+)-binding site is contributed by R154. K172 acts as the Proton acceptor in catalysis. 3 residues coordinate a divalent metal cation: E243, D244, and D267. Residues D267 and N411 each contribute to the NAD(+) site.

The protein belongs to the malic enzymes family. Homotetramer. Mg(2+) is required as a cofactor. Requires Mn(2+) as cofactor.

The enzyme catalyses (S)-malate + NAD(+) = pyruvate + CO2 + NADH. It carries out the reaction oxaloacetate + H(+) = pyruvate + CO2. The polypeptide is NAD-dependent malic enzyme 2 (Photobacterium profundum (strain SS9)).